Reading from the N-terminus, the 525-residue chain is D-3-phosphoglycerate dehydrogenase (525 aa).

NAD(+) is bound by residues 148–149 (RI), Asp168, Thr200, 227–229 (CAR), and Asp253. Residue Arg229 is part of the active site. Residue Glu258 is part of the active site. The active-site Proton donor is His276. 276–279 (HLGA) contributes to the NAD(+) binding site. The 73-residue stretch at 452–524 (LVYIQHQDTT…DIVSVKLIDL (73 aa)) folds into the ACT domain.

It belongs to the D-isomer specific 2-hydroxyacid dehydrogenase family.

The enzyme catalyses (2R)-3-phosphoglycerate + NAD(+) = 3-phosphooxypyruvate + NADH + H(+). It carries out the reaction (R)-2-hydroxyglutarate + NAD(+) = 2-oxoglutarate + NADH + H(+). It participates in amino-acid biosynthesis; L-serine biosynthesis; L-serine from 3-phospho-D-glycerate: step 1/3. In bacteria displays feedback inhibition by L-serine. Catalyzes the reversible oxidation of 3-phospho-D-glycerate to 3-phosphonooxypyruvate, the first step of the phosphorylated L-serine biosynthesis pathway. Also catalyzes the reversible oxidation of 2-hydroxyglutarate to 2-oxoglutarate. This Bacillus subtilis (strain 168) protein is D-3-phosphoglycerate dehydrogenase (serA).